Consider the following 709-residue polypeptide: ATP-binding cassette sub-family F member 3 (709 aa).

N-acetylalanine is present on Ala2. Ser83 is subject to Phosphoserine. Residues 129–143 (RLKAKQEKRSEKDTL) are compositionally biased toward basic and acidic residues. The segment at 129 to 171 (RLKAKQEKRSEKDTLKTSNPLVLEEASASQAGSRKESRLESSG) is disordered. Ser155, Ser157, and Ser161 each carry phosphoserine. Residues 161 to 171 (SRKESRLESSG) are compositionally biased toward basic and acidic residues. 2 ABC transporter domains span residues 178–424 (VRIE…LNQQ) and 492–707 (LQLD…RREG). Residue 210-217 (GRNGLGKT) coordinates ATP. Residue Ser283 is modified to Phosphoserine. Position 525-532 (525-532 (GENGAGKS)) interacts with ATP.

This sequence belongs to the ABC transporter superfamily. ABCF family. EF3 subfamily.

Displays an antiviral effect against flaviviruses such as west Nile virus (WNV) in the presence of OAS1B. The protein is ATP-binding cassette sub-family F member 3 (ABCF3) of Homo sapiens (Human).